Consider the following 421-residue polypeptide: Accessory Sec system protein translocase subunit SecY2 (421 aa).

Helical transmembrane passes span 17 to 37 (LWTS…IPGV), 69 to 89 (FALG…LTLI), 102 to 122 (TFLF…IAII), 139 to 159 (FGAM…LVWL), 165 to 185 (ILGI…NWPT), 204 to 224 (VILM…TVVV), 254 to 274 (PAGG…QYIL), 299 to 319 (PLGV…FAFI), 358 to 378 (SFVG…FGII), and 383 to 403 (TQYA…INII).

This sequence belongs to the SecY/SEC61-alpha family. SecY2 subfamily. Component of the accessory SecA2/SecY2 protein translocase complex required to export cell wall proteins. May form heterotrimers with SecE and SecG subunits.

It localises to the cell membrane. Its function is as follows. Part of the accessory SecA2/SecY2 system specifically required for export of possible cell wall proteins. The central subunit of a protein translocation channel. In Leuconostoc gelidum subsp. gasicomitatum (strain DSM 15947 / CCUG 46042 / CECT 5767 / JCM 12535 / LMG 18811 / NBRC 113245 / TB1-10) (Leuconostoc gasicomitatum), this protein is Accessory Sec system protein translocase subunit SecY2.